The following is a 658-amino-acid chain: Aspartate--tRNA ligase, mitochondrial (658 aa).

Residue E198 coordinates L-aspartate. Positions 226-229 (QQYK) are aspartate. Position 248 (R248) interacts with L-aspartate. ATP is bound by residues 248 to 250 (RDE) and E553. R560 is a binding site for L-aspartate. 604 to 607 (GFDR) lines the ATP pocket.

It belongs to the class-II aminoacyl-tRNA synthetase family. Type 1 subfamily.

It is found in the mitochondrion matrix. The catalysed reaction is tRNA(Asp) + L-aspartate + ATP = L-aspartyl-tRNA(Asp) + AMP + diphosphate. Its function is as follows. Catalyzes the attachment of aspartate to tRNA(Asp) in the mitochondrion. The protein is Aspartate--tRNA ligase, mitochondrial (MSD1) of Saccharomyces cerevisiae (strain ATCC 204508 / S288c) (Baker's yeast).